We begin with the raw amino-acid sequence, 366 residues long: MEHFDVAIIGLGPAGSALARKLAGKMQVIALDKKHQCGTEGFSKPCGGLLAPDAQRSFIRDGLTLPVDVIANPQIFSVKTVDVAASLTRNYQRSYININRHAFDLWMKSLIPASVEVYHDSLCRKIWREDDKWHVIFRADGWEQHISARYLVGADGANSMVRRHLYPDHQIRKYVAIQQWFAEKHPVPFYSCIFDNEITDCYSWSISKDGYFIFGGAYPMKDGQTRFTTLKEKMSAFQFQFGKAVKSEKCTVLFPSRWQDFVCGKDNAFLIGEAAGFISASSLEGISYALDSAEILRAVLLKQPEKSNAAYWRATRKLRLKLFGKIVKSRCLTAPALRKWIMRSGVAHIPQLKDYPTRFTSPTSRM.

This sequence belongs to the CbrA family.

The sequence is that of Protein CbrA (cbrA) from Escherichia coli O9:H4 (strain HS).